Here is a 292-residue protein sequence, read N- to C-terminus: MPELPEVETVRRGLEQKLKNFIIKRVEICRESTVAYPIDKIDFIEGLQNSLLYKWNRRGKYLIAELKKTVSNNNDANEISFVENGVLVVHLRMTGYFTFNNTLTNPCKHTRIRLFDNNNNELRYIDVRSFGQMWWVRDGLSPNNIIKGLGTLGPEPFSESFNVNYLKKVISNKTRSIKSILLDQTIIAGIGNIYADESLYSAGISPFREARTINKNEIKRLRRAVVDVLKKSIGAGGTTFSDFRDLEGENGNFGLQTNVYRRTGKKCRQCKNLIERQKISGRSTHWCRKCQK.

The active-site Schiff-base intermediate with DNA is the P2. E3 acts as the Proton donor in catalysis. The active-site Proton donor; for beta-elimination activity is the K60. Residues H109, R128, and K173 each contribute to the DNA site. The FPG-type zinc-finger motif lies at N258–K292. The active-site Proton donor; for delta-elimination activity is R282.

This sequence belongs to the FPG family. In terms of assembly, monomer. Zn(2+) is required as a cofactor.

The enzyme catalyses Hydrolysis of DNA containing ring-opened 7-methylguanine residues, releasing 2,6-diamino-4-hydroxy-5-(N-methyl)formamidopyrimidine.. It carries out the reaction 2'-deoxyribonucleotide-(2'-deoxyribose 5'-phosphate)-2'-deoxyribonucleotide-DNA = a 3'-end 2'-deoxyribonucleotide-(2,3-dehydro-2,3-deoxyribose 5'-phosphate)-DNA + a 5'-end 5'-phospho-2'-deoxyribonucleoside-DNA + H(+). Functionally, involved in base excision repair of DNA damaged by oxidation or by mutagenic agents. Acts as a DNA glycosylase that recognizes and removes damaged bases. Has a preference for oxidized purines, such as 7,8-dihydro-8-oxoguanine (8-oxoG). Has AP (apurinic/apyrimidinic) lyase activity and introduces nicks in the DNA strand. Cleaves the DNA backbone by beta-delta elimination to generate a single-strand break at the site of the removed base with both 3'- and 5'-phosphates. The protein is Formamidopyrimidine-DNA glycosylase of Prochlorococcus marinus subsp. pastoris (strain CCMP1986 / NIES-2087 / MED4).